Consider the following 177-residue polypeptide: Interleukin-1 receptor antagonist protein (177 aa).

Positions 1-25 (MRPSRSTRRHLISLLLFLFHSETAC) are cleaved as a signal peptide. A disulfide bridge links Cys91 with Cys141. A glycan (N-linked (GlcNAc...) asparagine) is linked at Asn109.

The protein belongs to the IL-1 family.

It localises to the secreted. Anti-inflammatory antagonist of interleukin-1 family of proinflammatory cytokines such as interleukin-1beta/IL1B and interleukin-1alpha/IL1A. Protects from immune dysregulation and uncontrolled systemic inflammation triggered by IL1 for a range of innate stimulatory agents such as pathogens. In Oryctolagus cuniculus (Rabbit), this protein is Interleukin-1 receptor antagonist protein (IL1RN).